Here is a 138-residue protein sequence, read N- to C-terminus: ATP synthase epsilon chain, chloroplastic (138 aa).

It belongs to the ATPase epsilon chain family. F-type ATPases have 2 components, CF(1) - the catalytic core - and CF(0) - the membrane proton channel. CF(1) has five subunits: alpha(3), beta(3), gamma(1), delta(1), epsilon(1). CF(0) has three main subunits: a, b and c.

It is found in the plastid. It localises to the chloroplast thylakoid membrane. In terms of biological role, produces ATP from ADP in the presence of a proton gradient across the membrane. This Huperzia lucidula (Shining clubmoss) protein is ATP synthase epsilon chain, chloroplastic.